The following is a 432-amino-acid chain: MEKITLAPISAVEGTINLPGSKSLSNRALLLAALAKGTTKVTNLLDSDDIRHMLNALKALGVRYQLSDDKTICEVEGLGGTFNIQDNLSLFLGNAGTAMRPLTAALCLKGKTESEIILTGEPRMKERPILHLVDALRQAGADIRYLENEGYPPLAIRNKGIKGGKVKIDGSISSQFLTALLMSAPLAENDTEIEIIGELVSKPYIDITLAMMRDFGVQVENHHYQKFQVKGNQSYISPNKYLVEGDASSASYFLAAGAIKGKVKVTGIGKNSIQGDRLFADVLEKMGAKITWGEDFIQAEHAELNGIDMDMNHIPDAAMTIATTALFANSETVIRNIYNWRVKETDRLTAMATELRKVGAEVEGGEDFIRIQPLPLNQFKHANIETYNDHRMAMCFSLIALSNTPVTILDPKCTAKTFPTFFNEFEKICLKN.

Residues Lys-22, Ser-23, and Arg-27 each coordinate 3-phosphoshikimate. Residue Lys-22 participates in phosphoenolpyruvate binding. Gly-96 and Arg-127 together coordinate phosphoenolpyruvate. Residues Ser-173, Ser-174, Gln-175, Ser-201, Asp-316, Asn-339, and Lys-343 each contribute to the 3-phosphoshikimate site. Gln-175 lines the phosphoenolpyruvate pocket. Asp-316 (proton acceptor) is an active-site residue. Phosphoenolpyruvate contacts are provided by Arg-347, Arg-391, and Lys-416.

Belongs to the EPSP synthase family. As to quaternary structure, monomer.

The protein localises to the cytoplasm. The enzyme catalyses 3-phosphoshikimate + phosphoenolpyruvate = 5-O-(1-carboxyvinyl)-3-phosphoshikimate + phosphate. Its pathway is metabolic intermediate biosynthesis; chorismate biosynthesis; chorismate from D-erythrose 4-phosphate and phosphoenolpyruvate: step 6/7. Its function is as follows. Catalyzes the transfer of the enolpyruvyl moiety of phosphoenolpyruvate (PEP) to the 5-hydroxyl of shikimate-3-phosphate (S3P) to produce enolpyruvyl shikimate-3-phosphate and inorganic phosphate. This Haemophilus influenzae (strain ATCC 51907 / DSM 11121 / KW20 / Rd) protein is 3-phosphoshikimate 1-carboxyvinyltransferase.